The following is a 268-amino-acid chain: UPF0328 protein ECU05_1640/ECU11_0090 (268 aa).

Belongs to the UPF0328 family.

This chain is UPF0328 protein ECU05_1640/ECU11_0090, found in Encephalitozoon cuniculi (strain GB-M1) (Microsporidian parasite).